The primary structure comprises 764 residues: MRPADLLQLVLLLDLPRDLGGMGCSSPPCECHQEEDFRVTCKDIQRIPSLPPSTQTLKLIETHLRTIPSHAFSNLPNISRIYVSIDVTLQQLESHSFYNLSKVTHIEIRNTRNLTYIDPDALKELPLLKFLGIFNTGLKMFPDLTKVYSTDIFFILEITDNPYMTSIPVNAFQGLCNETLTLKLYNNGFTSVQGYAFNGTKLDAVYLNKNKYLTVIDKDAFGGVYSGPSLLDVSQTSVTALPSKGLEHLKELIARNTWTLKKLPLSLSFLHLTRADLSYPSHCCAFKNQKKIRGILESLMCNESSMQSLRQRKSVNALNSPLHQEYEENLGDSIVGYKEKSKFQDTHNNAHYYVFFEEQEDEIIGFGQELKNPQEETLQAFDSHYDYTICGDSEDMVCTPKSDEFNPCEDIMGYKFLRIVVWFVSLLALLGNVFVLLILLTSHYKLNVPRFLMCNLAFADFCMGMYLLLIASVDLYTHSEYYNHAIDWQTGPGCNTAGFFTVFASELSVYTLTVITLERWYAITFAMRLDRKIRLRHACAIMVGGWVCCFLLALLPLVGISSYAKVSICLPMDTETPLALAYIVFVLTLNIVAFVIVCCCYVKIYITVRNPQYNPGDKDTKIAKRMAVLIFTDFICMAPISFYALSAILNKPLITVSNSKILLVLFYPLNSCANPFLYAIFTKAFQRDVFILLSKFGICKRQAQAYRGQRVPPKNSTDIQVQKVTHEMRQGLHNMEDVYELIENSHLTPKKQGQISEEYMQTVL.

An N-terminal signal peptide occupies residues Met1–Gly20. The Extracellular segment spans residues Gly21–Gly413. A disulfide bridge connects residues Cys31 and Cys41. Residues Asn77, Asn99, and Asn113 are each glycosylated (N-linked (GlcNAc...) asparagine). LRR repeat units lie at residues Leu100–Glu124, Leu125–Thr150, Ile152–Gly174, Cys176–Gly199, Thr200–Gly223, Gly227–His248, and Lys250–His271. N-linked (GlcNAc...) asparagine glycans are attached at residues Asn177 and Asn198. The N-linked (GlcNAc...) asparagine glycan is linked to Asn302. At Tyr385 the chain carries Sulfotyrosine. A helical membrane pass occupies residues Tyr414–Thr441. Residues Ser442–Arg450 lie on the Cytoplasmic side of the membrane. The helical transmembrane segment at Phe451–Val473 threads the bilayer. Residues Asp474 to Cys494 are Extracellular-facing. Cys494 and Cys569 are disulfide-bonded. Residues Asn495–Leu517 form a helical membrane-spanning segment. The Cytoplasmic segment spans residues Glu518–His537. Residues Ala538 to Ile560 form a helical membrane-spanning segment. Residues Ser561–Leu580 lie on the Extracellular side of the membrane. Residues Ala581 to Val602 traverse the membrane as a helical segment. Over Lys603–Arg625 the chain is Cytoplasmic. A helical transmembrane segment spans residues Met626–Leu649. Topologically, residues Asn650–Lys660 are extracellular. The chain crosses the membrane as a helical span at residues Ile661–Thr682. Over Lys683–Leu764 the chain is Cytoplasmic. The PDZ-binding motif lies at Thr762–Leu764.

This sequence belongs to the G-protein coupled receptor 1 family. FSH/LSH/TSH subfamily. In terms of assembly, interacts with heterodimer GPHA2:GPHB5; this interaction stimulates cAMP production. Interacts (via the PDZ-binding motif) with SCRIB; regulates TSHR trafficking and function. Post-translationally, glycosylated. Sulfated. Sulfation on Tyr-385 plays a role in thyrotropin receptor binding and activation. In terms of tissue distribution, expressed in thyroide cells (at protein level). Expressed in the thyroid.

Its subcellular location is the cell membrane. The protein resides in the basolateral cell membrane. Functionally, receptor for the thyroid-stimulating hormone (TSH) or thyrotropin. Also acts as a receptor for the heterodimeric glycoprotein hormone (GPHA2:GPHB5) or thyrostimulin. The activity of this receptor is mediated by G proteins which activate adenylate cyclase. Plays a central role in controlling thyroid cell metabolism. The chain is Thyrotropin receptor (TSHR) from Homo sapiens (Human).